Consider the following 256-residue polypeptide: Ubiquinone/menaquinone biosynthesis C-methyltransferase UbiE (256 aa).

S-adenosyl-L-methionine contacts are provided by residues T79, D100, and 128 to 129 (DA).

It belongs to the class I-like SAM-binding methyltransferase superfamily. MenG/UbiE family.

It carries out the reaction a 2-demethylmenaquinol + S-adenosyl-L-methionine = a menaquinol + S-adenosyl-L-homocysteine + H(+). The enzyme catalyses a 2-methoxy-6-(all-trans-polyprenyl)benzene-1,4-diol + S-adenosyl-L-methionine = a 5-methoxy-2-methyl-3-(all-trans-polyprenyl)benzene-1,4-diol + S-adenosyl-L-homocysteine + H(+). It participates in quinol/quinone metabolism; menaquinone biosynthesis; menaquinol from 1,4-dihydroxy-2-naphthoate: step 2/2. Its pathway is cofactor biosynthesis; ubiquinone biosynthesis. Its function is as follows. Methyltransferase required for the conversion of demethylmenaquinol (DMKH2) to menaquinol (MKH2) and the conversion of 2-polyprenyl-6-methoxy-1,4-benzoquinol (DDMQH2) to 2-polyprenyl-3-methyl-6-methoxy-1,4-benzoquinol (DMQH2). This is Ubiquinone/menaquinone biosynthesis C-methyltransferase UbiE from Pseudomonas fluorescens (strain SBW25).